The following is a 453-amino-acid chain: Serine incorporator 1 (453 aa).

A lipid anchor (N-myristoyl glycine) is attached at Gly-2. Residues 2–39 (GSVLGLCSMASWIPCLCGSAPCLLCRCCPSGNNSTVTR) are Cytoplasmic-facing. A helical transmembrane segment spans residues 40-60 (LIYALFLLVGVCVACVMLIPG). Residues 61–88 (MEEQLNKIPGFCENEKGVVPCNILVGYK) lie on the Lumenal side of the membrane. A helical membrane pass occupies residues 89-109 (AVYRLCFGLAMFYLLLSLLMI). Over 110 to 123 (KVKSSSDPRAAVHN) the chain is Cytoplasmic. A helical membrane pass occupies residues 124-144 (GFWFFKFAAAIAIIIGAFFIP). Residues 145–151 (EGTFTTV) are Lumenal-facing. The chain crosses the membrane as a helical span at residues 152–172 (WFYVGMAGAFCFILIQLVLLI). The Cytoplasmic portion of the chain corresponds to 173 to 197 (DFAHSWNESWVEKMEEGNSRCWYAA). The helical transmembrane segment at 198 to 218 (LLSATALNYLLSLVAIVLFFV) threads the bilayer. Topologically, residues 219–231 (YYTHPASCSENKA) are lumenal. The helical transmembrane segment at 232–252 (FISVNMLLCIGASVMSILPKI) threads the bilayer. Topologically, residues 253-259 (QESQPRS) are cytoplasmic. A helical membrane pass occupies residues 260–280 (GLLQSSVITVYTMYLTWSAMT). Topologically, residues 281–309 (NEPETNCNPSLLSIIGYNTTSTVPKEGQS) are lumenal. A helical transmembrane segment spans residues 310-330 (VQWWHAQGIIGLILFLLCVFY). The Cytoplasmic portion of the chain corresponds to 331 to 387 (SSIRTSNNSQVNKLTLTSDESTLIEDGGARSDGSLEDGDDVHRAVDNERDGVTYSYS). Phosphoserine is present on Ser-351. Thr-352 is subject to Phosphothreonine. 2 positions are modified to phosphoserine: Ser-361 and Ser-364. The chain crosses the membrane as a helical span at residues 388–408 (FFHFMLFLASLYIMMTLTNWY). The Lumenal portion of the chain corresponds to 409 to 426 (RYEPSREMKSQWTAVWVK). The helical transmembrane segment at 427–447 (ISSSWIGIVLYVWTLVAPLVL) threads the bilayer. Over 448-453 (TNRDFD) the chain is Cytoplasmic.

Belongs to the TDE1 family. As to quaternary structure, interacts with SPTLC1.

Its subcellular location is the endoplasmic reticulum membrane. Enhances the incorporation of serine into phosphatidylserine and sphingolipids. In Pongo abelii (Sumatran orangutan), this protein is Serine incorporator 1 (SERINC1).